The following is a 170-amino-acid chain: Protein AIG2 A (170 aa).

15–20 (YGSFQE) serves as a coordination point for substrate. Glu83 (proton acceptor) is an active-site residue. Residues 147–162 (KNPNGRSREEFEKFVQ) show a composition bias toward basic and acidic residues. A disordered region spans residues 147-170 (KNPNGRSREEFEKFVQDDSSPASA).

Belongs to the gamma-glutamylcyclotransferase family. In terms of tissue distribution, ubiquitous.

Putative gamma-glutamylcyclotransferase. The protein is Protein AIG2 A of Arabidopsis thaliana (Mouse-ear cress).